The following is a 210-amino-acid chain: Syntaxin-binding protein 6 (210 aa).

Serine 2 carries the post-translational modification N-acetylserine. The region spanning 151 to 210 is the v-SNARE coiled-coil homology domain; sequence GNSILHSAADSVTSAVQKASQALNERGERLGRAEEKTEDLKNSAQQFAETAHKLAMKHKC.

Part of a ternary complex containing SNAP25 and STX1A that can be dissociated by NAPA and NSF. Interacts with STX4A.

It is found in the cytoplasm. It localises to the membrane. Functionally, forms non-fusogenic complexes with SNAP25 and STX1A and may thereby modulate the formation of functional SNARE complexes and exocytosis. This is Syntaxin-binding protein 6 (STXBP6) from Bos taurus (Bovine).